The primary structure comprises 352 residues: Hematopoietic SH2 domain-containing protein (352 aa).

In terms of domain architecture, SH2 spans 34–125 (WFHGAISRED…PRRELLTQPC (92 aa)). 2 disordered regions span residues 157 to 199 (EEAS…LGET) and 241 to 352 (VISG…PGYC). The span at 180 to 191 (RITTKEATSSCP) shows a compositional bias: polar residues. The span at 283–295 (PKDRKVPTRKAER) shows a compositional bias: basic and acidic residues. The span at 343–352 (QPPPFAPGYC) shows a compositional bias: pro residues.

As to quaternary structure, interacts with FES and TNK2. In terms of processing, may be phosphorylated by FES and ACK1. Predominantly expressed in spleen and hematopoietic cells such as peripheral blood leukocytes and weakly expressed in prostate, thymus, heart, small intestine and placenta.

It is found in the cytoplasm. It localises to the nucleus. Its function is as follows. May be a modulator of the apoptotic response through its ability to affect mitochondrial stability. Adapter protein involved in tyrosine kinase and CD28 signaling. Seems to affect CD28-mediated activation of the RE/AP element of the interleukin-2 promoter. This Homo sapiens (Human) protein is Hematopoietic SH2 domain-containing protein (HSH2D).